The chain runs to 449 residues: Sensor protein QseC (449 aa).

The Cytoplasmic portion of the chain corresponds to 1–12 (MKFTQRLSLRVR). The chain crosses the membrane as a helical span at residues 13–33 (LTLIFLILASVTWLLSSFVAW). Topologically, residues 34–156 (KQTTDNVDEL…QEWEYREDMA (123 aa)) are periplasmic. The chain crosses the membrane as a helical span at residues 157–177 (LAIVAGQLIPWLVALPIMLII). At 178-449 (MMVLLGRELA…QGGFEAKVSW (272 aa)) the chain is on the cytoplasmic side. In terms of domain architecture, Histidine kinase spans 243–449 (DAAHELRSPL…QGGFEAKVSW (207 aa)). Histidine 246 is modified (phosphohistidine; by autocatalysis).

The protein localises to the cell inner membrane. The catalysed reaction is ATP + protein L-histidine = ADP + protein N-phospho-L-histidine.. Functionally, member of a two-component regulatory system QseB/QseC. Activates the flagella regulon by activating transcription of FlhDC. May activate QseB by phosphorylation. This Escherichia coli (strain K12) protein is Sensor protein QseC (qseC).